We begin with the raw amino-acid sequence, 341 residues long: Phosphoribosylformylglycinamidine cyclo-ligase (341 aa).

Belongs to the AIR synthase family.

The protein resides in the cytoplasm. It catalyses the reaction 2-formamido-N(1)-(5-O-phospho-beta-D-ribosyl)acetamidine + ATP = 5-amino-1-(5-phospho-beta-D-ribosyl)imidazole + ADP + phosphate + H(+). It participates in purine metabolism; IMP biosynthesis via de novo pathway; 5-amino-1-(5-phospho-D-ribosyl)imidazole from N(2)-formyl-N(1)-(5-phospho-D-ribosyl)glycinamide: step 2/2. This is Phosphoribosylformylglycinamidine cyclo-ligase from Xanthomonas oryzae pv. oryzae (strain MAFF 311018).